A 695-amino-acid chain; its full sequence is MAREFSLEKTRNIGIMAHIDAGKTTTTERILFYTGRIHKIGETHEGASQMDWMEQEQERGITITSAATTAQWKGYRVNIIDTPGHVDFTVEVERSLRVLDGAVAVLDAQSGVEPQTETVWRQATTYGVPRVVFVNKMDKIGADFLYSVGTLHERLAANAHPIQLPIGAEDTFEGIIDLIEMNALYYEDDLGNDPHVKEIPADLKDLADEYRGKLVEAVAELDEELMMKYLEGEEITKEELKAGIRKGTLNVEFYPVVCGTAFKNKGVQPMLDAVLDYLPAPTDVPAINGVLPDGEEAARHADDSEPFSSLAFKVMTDPYVGRLTFFRVYSGTLNSGSYVQNSTKGKRERVGRILQMHANHREEISIVYAGDIAAAVGLKDTTTGDTLCDEKEQIILESMEFPEPVIQVAIEPKSKADQDKMGQALAKLAEEDPTFRAETDQETGQTLISGMGELHLDILVDRMRREFRVEANVGDPQVSYRETFRKSAQVEGKFVRQSGGRGQYGHVWIEFGPNEEGKGFEFENAIVGGVVPREYIPAVQAGLEGALDNGVLAGYPLIDIKAKLYDGSYHDVDSNEMAFKVAASMALRNAAKKCDPVILEPMMAVEVVIPEEYLGDIMGNITSRRGRVDGMEARGNAQVVRAFVPLANMFGYATHLRSGTQGRGVYTMQFDHYEEVPKSIAEEIIKANGGNNKED.

Residues 8–282 (EKTRNIGIMA…AVLDYLPAPT (275 aa)) enclose the tr-type G domain. Residues 17-24 (AHIDAGKT), 81-85 (DTPGH), and 135-138 (NKMD) each bind GTP.

It belongs to the TRAFAC class translation factor GTPase superfamily. Classic translation factor GTPase family. EF-G/EF-2 subfamily.

The protein localises to the cytoplasm. In terms of biological role, catalyzes the GTP-dependent ribosomal translocation step during translation elongation. During this step, the ribosome changes from the pre-translocational (PRE) to the post-translocational (POST) state as the newly formed A-site-bound peptidyl-tRNA and P-site-bound deacylated tRNA move to the P and E sites, respectively. Catalyzes the coordinated movement of the two tRNA molecules, the mRNA and conformational changes in the ribosome. This is Elongation factor G from Listeria welshimeri serovar 6b (strain ATCC 35897 / DSM 20650 / CCUG 15529 / CIP 8149 / NCTC 11857 / SLCC 5334 / V8).